A 128-amino-acid chain; its full sequence is EPIDERMAL PATTERNING FACTOR-like protein 2 (128 aa).

An N-terminal signal peptide occupies residues 1–28 (MVWSSNMSSFLLILLILNSTHFSLMANG). Intrachain disulfides connect Cys60–Cys119, Cys65–Cys71, and Cys68–Cys121. Positions 79–90 (NPQTKLHSPLTT) are enriched in polar residues. The disordered stretch occupies residues 79-100 (NPQTKLHSPLTTSSSSSSETIH).

This sequence belongs to the plant cysteine rich small secretory peptide family. Epidermal patterning factor subfamily.

The protein localises to the secreted. Its function is as follows. Controls stomatal patterning. This Arabidopsis thaliana (Mouse-ear cress) protein is EPIDERMAL PATTERNING FACTOR-like protein 2.